A 190-amino-acid polypeptide reads, in one-letter code: MKLLEDKILKEGILLEGNILKVDSFLNHQMDVKLFNEIGKEFKRRFEGCNINKILTIEASGIGIATIVSQYFDFCPVVFAKKVDAANMDKDTYESKVHSFTKNKTYNVRVSKKYINKGDKILLIDDFLANGCAALGLIDIIKQGGAELAGVGIAIEKGFQKGRKELEKVGAKVESLAILDKIENDKVYFK.

The xanthine site is built by Leu-20 and Asn-27. 129–133 (ANGCA) is a binding site for 5-phospho-alpha-D-ribose 1-diphosphate. Lys-157 is a xanthine binding site.

Belongs to the purine/pyrimidine phosphoribosyltransferase family. Xpt subfamily. Homodimer.

It localises to the cytoplasm. The enzyme catalyses XMP + diphosphate = xanthine + 5-phospho-alpha-D-ribose 1-diphosphate. It participates in purine metabolism; XMP biosynthesis via salvage pathway; XMP from xanthine: step 1/1. Functionally, converts the preformed base xanthine, a product of nucleic acid breakdown, to xanthosine 5'-monophosphate (XMP), so it can be reused for RNA or DNA synthesis. The protein is Xanthine phosphoribosyltransferase 2 of Clostridium botulinum (strain Langeland / NCTC 10281 / Type F).